The following is a 248-amino-acid chain: tRNA (guanine-N(1)-)-methyltransferase (248 aa).

S-adenosyl-L-methionine is bound by residues Gly-113 and 133–138; that span reads LGDFVL.

The protein belongs to the RNA methyltransferase TrmD family. Homodimer.

The protein resides in the cytoplasm. The catalysed reaction is guanosine(37) in tRNA + S-adenosyl-L-methionine = N(1)-methylguanosine(37) in tRNA + S-adenosyl-L-homocysteine + H(+). Its function is as follows. Specifically methylates guanosine-37 in various tRNAs. The chain is tRNA (guanine-N(1)-)-methyltransferase from Albidiferax ferrireducens (strain ATCC BAA-621 / DSM 15236 / T118) (Rhodoferax ferrireducens).